An 85-amino-acid chain; its full sequence is MKTSVFAAILGLALFAVLCSGSELQEKDLKETLLSAIMETALEAQPEERECRYLFGGCKTTSDCCKHLGCKFRDKYCAWDFTFSK.

Residues 1 to 21 (MKTSVFAAILGLALFAVLCSG) form the signal peptide. A propeptide spanning residues 22–49 (SELQEKDLKETLLSAIMETALEAQPEER) is cleaved from the precursor. 3 disulfides stabilise this stretch: C51–C65, C58–C70, and C64–C77. An involved in active face region spans residues 53-55 (YLF).

It belongs to the neurotoxin 10 (Hwtx-1) family. 09 (HaTx) subfamily. Expressed by the venom gland.

Its subcellular location is the secreted. Its function is as follows. Inhibits Kv2.1/KCNB1 and Kv4.2/KCND2 voltage-gated potassium channels. Acts as a gating modifier by shifting channel openings to more depolarized voltages and acts via the occupancy of multiple binding sites on the channel. The toxin binding sites are situated on the S3-S4 extracellular linker of the channel. At least two hanatoxin molecules can occupy the Kv2.1/KCNB1 channel, and maybe more (three or four). Can also inhibit calcium channels (Cav2.1/CACNA1A). Needs to partition into the membrane in order to bind to the channel. This Grammostola rosea (Chilean rose tarantula) protein is Kappa-theraphotoxin-Gr1a.